Reading from the N-terminus, the 758-residue chain is 3-isopropylmalate dehydratase (758 aa).

3 residues coordinate [4Fe-4S] cluster: cysteine 359, cysteine 420, and cysteine 423. 2 positions are modified to phosphoserine: serine 486 and serine 488.

This sequence belongs to the aconitase/IPM isomerase family. [4Fe-4S] cluster is required as a cofactor.

The enzyme catalyses (2R,3S)-3-isopropylmalate = (2S)-2-isopropylmalate. It functions in the pathway amino-acid biosynthesis; L-leucine biosynthesis; L-leucine from 3-methyl-2-oxobutanoate: step 2/4. Its function is as follows. Catalyzes the isomerization between 2-isopropylmalate and 3-isopropylmalate, via the formation of 2-isopropylmaleate. This chain is 3-isopropylmalate dehydratase (leu2), found in Schizosaccharomyces pombe (strain 972 / ATCC 24843) (Fission yeast).